The sequence spans 130 residues: Astrocytic phosphoprotein PEA-15 (130 aa).

In terms of domain architecture, DED spans 3 to 81; that stretch reads EYGTLLQDLT…RPDLLTMVVD (79 aa). Residues Ser61 and Ser90 each carry the phosphoserine modification. The microtubule-binding stretch occupies residues 98–107; the sequence is KLTRIPSAKK. Ser104 carries the phosphoserine; by PKC modification. Ser116 is subject to Phosphoserine; by CaMK2. A microtubule-binding region spans residues 122–129; that stretch reads KLAPPPKK.

As to quaternary structure, binds RPS6KA3, MAPK3 and MAPK1. Interacts with CASP8 and FADD. Transient interaction with PLD1 and PLD2. Post-translationally, phosphorylated by protein kinase C and calcium-calmodulin-dependent protein kinase. These phosphorylation events are modulated by neurotransmitters or hormones. Predominantly expressed in the brain. Low levels in some peripheral organs.

The protein localises to the cytoplasm. In terms of biological role, blocks Ras-mediated inhibition of integrin activation and modulates the ERK MAP kinase cascade. Inhibits RPS6KA3 activities by retaining it in the cytoplasm. Inhibits both TNFRSF6- and TNFRSF1A-mediated CASP8 activity and apoptosis. Regulates glucose transport by controlling both the content of SLC2A1 glucose transporters on the plasma membrane and the insulin-dependent trafficking of SLC2A4 from the cell interior to the surface. The protein is Astrocytic phosphoprotein PEA-15 (Pea15) of Mus musculus (Mouse).